A 357-amino-acid polypeptide reads, in one-letter code: 4-hydroxymandelate synthase (357 aa).

2 consecutive VOC domains span residues 5-129 (EIDY…LIQR) and 158-309 (GIDH…IFTA). His-161 provides a ligand contact to Fe cation. Substrate-binding residues include His-161, Ser-201, Thr-214, His-241, and Gln-305. His-241 contributes to the Fe cation binding site. Fe cation is bound at residue Glu-320.

This sequence belongs to the 4HPPD family. Monomer. Fe cation is required as a cofactor.

It catalyses the reaction 3-(4-hydroxyphenyl)pyruvate + O2 = (S)-4-hydroxymandelate + CO2. The protein operates within antibiotic biosynthesis; vancomycin biosynthesis. In terms of biological role, required to synthesize hydroxyphenylglycine, a recurring skeletal component of nonproteinogenic macrocyclic peptide antibiotics such as vancomycin. Catalyzes the conversion of p-hydroxyphenylpyruvate to p-hydroxymandelate. The decarboxylation and hydroxylation activities of HmaS show novel and distinct regioselectivity, compared to all other known p-hydroxyphenylpyruvate dioxygenases, by hydroxylating the benzylic position of the substrate instead of the phenyl ring. This Amycolatopsis orientalis (Nocardia orientalis) protein is 4-hydroxymandelate synthase.